The following is a 212-amino-acid chain: Ribonuclease HII (212 aa).

Positions 28–212 (SLIAGIDEVG…KSFAPVRQVF (185 aa)) constitute an RNase H type-2 domain. 3 residues coordinate a divalent metal cation: D34, E35, and D127.

It belongs to the RNase HII family. Mn(2+) is required as a cofactor. It depends on Mg(2+) as a cofactor.

The protein resides in the cytoplasm. It catalyses the reaction Endonucleolytic cleavage to 5'-phosphomonoester.. In terms of biological role, endonuclease that specifically degrades the RNA of RNA-DNA hybrids. The sequence is that of Ribonuclease HII from Chlamydia abortus (strain DSM 27085 / S26/3) (Chlamydophila abortus).